A 394-amino-acid chain; its full sequence is Elongation factor Tu 2 (394 aa).

Positions 10 to 204 (KPHVNVGTIG…ALDSYIPQPE (195 aa)) constitute a tr-type G domain. The segment at 19 to 26 (GHVDHGKT) is G1. GTP is bound at residue 19–26 (GHVDHGKT). T26 contributes to the Mg(2+) binding site. The tract at residues 60-64 (GITIN) is G2. A G3 region spans residues 81-84 (DCPG). Residues 81–85 (DCPGH) and 136–139 (NKCD) contribute to the GTP site. A G4 region spans residues 136-139 (NKCD). The interval 174-176 (SAL) is G5.

The protein belongs to the TRAFAC class translation factor GTPase superfamily. Classic translation factor GTPase family. EF-Tu/EF-1A subfamily. In terms of assembly, monomer.

It is found in the cytoplasm. The catalysed reaction is GTP + H2O = GDP + phosphate + H(+). Functionally, GTP hydrolase that promotes the GTP-dependent binding of aminoacyl-tRNA to the A-site of ribosomes during protein biosynthesis. This Yersinia pestis bv. Antiqua (strain Antiqua) protein is Elongation factor Tu 2.